We begin with the raw amino-acid sequence, 563 residues long: Probable terpene synthase 4 (563 aa).

Residues aspartate 316, aspartate 320, and glutamate 469 each contribute to the Mg(2+) site. The DDXXD motif signature appears at 316–320 (DDIFD).

Belongs to the terpene synthase family. Mg(2+) is required as a cofactor.

In terms of biological role, probable sesquiterpene synthase. The sequence is that of Probable terpene synthase 4 (TPS4) from Ricinus communis (Castor bean).